The following is a 379-amino-acid chain: MTTNQQNAVVSQPQTVVVKLGTSVLTGGTLALNRAHMVELARQCAELKKQGHSVVMVSSGAIAAGREHLGYPALPNEMASKQLLAAVGQSRLIQTWESLFGIYGIKIGQMLLTRADLDDRERFLNARDTINALVANDIIPIVNENDAVATNEIKVGDNDNLSALVGILCGADKLLLLTDQKGLFTADPRKDPNAELIKEVKTIDDTLRKIAGGSGTTLGTGGMATKLQAADIARRAGIEVIIAAGSAPNVIFDSLSSEPQGTRFLPCEEALENRKRWILAGPAASGDIIIDDGAVNAVVGKGSSLLAKGVIKVSGDFARGEVARVTNSHGKLVARGISAYSSEDLAKIAGKHSKDIISILGHDYGSEVIHRDDLVVIQE.

Lys-19 serves as a coordination point for ATP. Residues Ser-59, Asp-146, and Asn-158 each contribute to the substrate site. Residues 178–179 (TD) and 220–226 (TGGMATK) contribute to the ATP site. The region spanning 285-363 (SGDIIIDDGA…KDIISILGHD (79 aa)) is the PUA domain.

Belongs to the glutamate 5-kinase family.

It localises to the cytoplasm. It carries out the reaction L-glutamate + ATP = L-glutamyl 5-phosphate + ADP. The protein operates within amino-acid biosynthesis; L-proline biosynthesis; L-glutamate 5-semialdehyde from L-glutamate: step 1/2. Its function is as follows. Catalyzes the transfer of a phosphate group to glutamate to form L-glutamate 5-phosphate. The chain is Glutamate 5-kinase from Vibrio campbellii (strain ATCC BAA-1116).